The sequence spans 660 residues: tRNA 5-methylaminomethyl-2-thiouridine biosynthesis bifunctional protein MnmC (660 aa).

The segment at 1 to 235 (MTITRHARID…KWEVLRGAFI (235 aa)) is tRNA (mnm(5)s(2)U34)-methyltransferase. An FAD-dependent cmnm(5)s(2)U34 oxidoreductase region spans residues 266-660 (IGAGLAGCAT…LRGLIRGGGK (395 aa)).

In the N-terminal section; belongs to the methyltransferase superfamily. tRNA (mnm(5)s(2)U34)-methyltransferase family. It in the C-terminal section; belongs to the DAO family. Requires FAD as cofactor.

It localises to the cytoplasm. It catalyses the reaction 5-aminomethyl-2-thiouridine(34) in tRNA + S-adenosyl-L-methionine = 5-methylaminomethyl-2-thiouridine(34) in tRNA + S-adenosyl-L-homocysteine + H(+). In terms of biological role, catalyzes the last two steps in the biosynthesis of 5-methylaminomethyl-2-thiouridine (mnm(5)s(2)U) at the wobble position (U34) in tRNA. Catalyzes the FAD-dependent demodification of cmnm(5)s(2)U34 to nm(5)s(2)U34, followed by the transfer of a methyl group from S-adenosyl-L-methionine to nm(5)s(2)U34, to form mnm(5)s(2)U34. This Pseudomonas syringae pv. tomato (strain ATCC BAA-871 / DC3000) protein is tRNA 5-methylaminomethyl-2-thiouridine biosynthesis bifunctional protein MnmC.